Reading from the N-terminus, the 491-residue chain is tRNA-2-methylthio-N(6)-dimethylallyladenosine synthase (491 aa).

Residues 54–172 (KTYHIKTFGC…ILNLLEQVIF (119 aa)) enclose the MTTase N-terminal domain. [4Fe-4S] cluster contacts are provided by C63, C99, C133, C209, C213, and C216. The Radical SAM core domain occupies 195–426 (RTNNLKGFVN…NEMVKTFSKK (232 aa)). In terms of domain architecture, TRAM spans 429-491 (EKYVNKVLDV…RFTLNGKMID (63 aa)).

It belongs to the methylthiotransferase family. MiaB subfamily. In terms of assembly, monomer. Requires [4Fe-4S] cluster as cofactor.

Its subcellular location is the cytoplasm. It catalyses the reaction N(6)-dimethylallyladenosine(37) in tRNA + (sulfur carrier)-SH + AH2 + 2 S-adenosyl-L-methionine = 2-methylsulfanyl-N(6)-dimethylallyladenosine(37) in tRNA + (sulfur carrier)-H + 5'-deoxyadenosine + L-methionine + A + S-adenosyl-L-homocysteine + 2 H(+). Functionally, catalyzes the methylthiolation of N6-(dimethylallyl)adenosine (i(6)A), leading to the formation of 2-methylthio-N6-(dimethylallyl)adenosine (ms(2)i(6)A) at position 37 in tRNAs that read codons beginning with uridine. This Malacoplasma penetrans (strain HF-2) (Mycoplasma penetrans) protein is tRNA-2-methylthio-N(6)-dimethylallyladenosine synthase.